Reading from the N-terminus, the 302-residue chain is Glutamate/aspartate import solute-binding protein (302 aa).

Positions 1–22 (MQLRKPATAILALALSAGLAQA) are cleaved as a signal peptide.

The protein belongs to the bacterial solute-binding protein 3 family. In terms of assembly, the complex is composed of two ATP-binding proteins (GltL), two transmembrane proteins (GltJ and GltK) and a solute-binding protein (GltI).

The protein resides in the periplasm. Functionally, part of the ABC transporter complex GltIJKL involved in glutamate and aspartate uptake. Binds to both glutamate and aspartate. The protein is Glutamate/aspartate import solute-binding protein (gltI) of Escherichia coli (strain K12).